Here is a 430-residue protein sequence, read N- to C-terminus: Type 3 secretion system ATPase (430 aa).

ATP is bound at residue 162 to 167; the sequence is GCGKTF.

Belongs to the ATPase alpha/beta chains family. T3SS ATPase subfamily. The core secretion machinery of the T3SS is composed of approximately 20 different proteins, including cytoplasmic components, a base, an export apparatus and a needle. This subunit is part of the cytosolic complex. Forms homohexamers. Interacts directly with MxiN/SctL (stator protein) and Spa13/SctO (stalk protein). Can form a soluble complex with Spa33/SctQ, MxiN/SctL and MxiK/SctK.

The protein localises to the cytoplasm. It carries out the reaction ATP + H2O + cellular proteinSide 1 = ADP + phosphate + cellular proteinSide 2.. With respect to regulation, oligomerization increases ATPase activity. Monomeric forms exhibit low-level ATPase activity by forming short-lived oligomers with active site contributions from at least two protomers. In contrast, oligomers exhibit enhanced ATP hydrolysis rates that likely result from multiple preformed active sites within the oligomeric complex. Oligomerization is important for both enzyme activation and T3SS function. Activity is regulated by MxiN/SctL, which differentially regulates the activity of the monomer and the oligomer: it up-regulates the ATPase activity of the monomer, while it down-regulates the activity of the oligomer. Functionally, ATPase component of the type III secretion system (T3SS), also called injectisome, which is used to inject bacterial effector proteins into eukaryotic host cells. Acts as a molecular motor to provide the energy that is required for the export of proteins. Required for type III secretion apparatus (T3SA) formation, proper protein secretion, host cell invasion and virulence. May play a critical role in T3SS substrate recognition, disassembly of the effector/chaperone complex and unfolding of the effector in an ATP-dependent manner prior to secretion. In Shigella flexneri, this protein is Type 3 secretion system ATPase.